Here is a 261-residue protein sequence, read N- to C-terminus: Cytochrome c oxidase subunit 3 (261 aa).

The Mitochondrial matrix portion of the chain corresponds to 1–15; sequence MTHQTHAYHMVNPSP. A helical membrane pass occupies residues 16-34; the sequence is WPLTGALSALLMTSGLIMW. The Mitochondrial intermembrane segment spans residues 35-40; it reads FHFNSM. A helical transmembrane segment spans residues 41–66; that stretch reads YLLMLGLTTNTLTMYQWWRDIVREST. The Mitochondrial matrix segment spans residues 67 to 72; that stretch reads FQGHHT. Residues 73 to 105 form a helical membrane-spanning segment; the sequence is PIVQKGLRYGMILFIVSEVFFFAGFFWAFYHSS. The Mitochondrial intermembrane portion of the chain corresponds to 106-128; it reads LAPTPELGGCWPPTGITPLNPME. A helical transmembrane segment spans residues 129–152; it reads VPLLNTSVLLASGVSITWAHHSLM. Topologically, residues 153–155 are mitochondrial matrix; the sequence is EGN. Residues 156–183 form a helical membrane-spanning segment; the sequence is RKHMLQALFITISLGIYFTLLQASEYYE. Topologically, residues 184–190 are mitochondrial intermembrane; sequence TPFTISD. The chain crosses the membrane as a helical span at residues 191–223; the sequence is GIYGSTFFMATGFHGLHVIIGSTFLIVCFVRQL. Residues 224–232 lie on the Mitochondrial matrix side of the membrane; sequence KFHFTSNHH. A helical membrane pass occupies residues 233–256; it reads FGFEAAAWYWHFVDVVWLFLYVSI. The Mitochondrial intermembrane portion of the chain corresponds to 257-261; that stretch reads YWWGS.

This sequence belongs to the cytochrome c oxidase subunit 3 family. As to quaternary structure, component of the cytochrome c oxidase (complex IV, CIV), a multisubunit enzyme composed of 14 subunits. The complex is composed of a catalytic core of 3 subunits MT-CO1, MT-CO2 and MT-CO3, encoded in the mitochondrial DNA, and 11 supernumerary subunits COX4I, COX5A, COX5B, COX6A, COX6B, COX6C, COX7A, COX7B, COX7C, COX8 and NDUFA4, which are encoded in the nuclear genome. The complex exists as a monomer or a dimer and forms supercomplexes (SCs) in the inner mitochondrial membrane with NADH-ubiquinone oxidoreductase (complex I, CI) and ubiquinol-cytochrome c oxidoreductase (cytochrome b-c1 complex, complex III, CIII), resulting in different assemblies (supercomplex SCI(1)III(2)IV(1) and megacomplex MCI(2)III(2)IV(2)).

It is found in the mitochondrion inner membrane. The catalysed reaction is 4 Fe(II)-[cytochrome c] + O2 + 8 H(+)(in) = 4 Fe(III)-[cytochrome c] + 2 H2O + 4 H(+)(out). Functionally, component of the cytochrome c oxidase, the last enzyme in the mitochondrial electron transport chain which drives oxidative phosphorylation. The respiratory chain contains 3 multisubunit complexes succinate dehydrogenase (complex II, CII), ubiquinol-cytochrome c oxidoreductase (cytochrome b-c1 complex, complex III, CIII) and cytochrome c oxidase (complex IV, CIV), that cooperate to transfer electrons derived from NADH and succinate to molecular oxygen, creating an electrochemical gradient over the inner membrane that drives transmembrane transport and the ATP synthase. Cytochrome c oxidase is the component of the respiratory chain that catalyzes the reduction of oxygen to water. Electrons originating from reduced cytochrome c in the intermembrane space (IMS) are transferred via the dinuclear copper A center (CU(A)) of subunit 2 and heme A of subunit 1 to the active site in subunit 1, a binuclear center (BNC) formed by heme A3 and copper B (CU(B)). The BNC reduces molecular oxygen to 2 water molecules using 4 electrons from cytochrome c in the IMS and 4 protons from the mitochondrial matrix. This Phoca vitulina (Harbor seal) protein is Cytochrome c oxidase subunit 3 (MT-CO3).